Here is a 319-residue protein sequence, read N- to C-terminus: Acetyl-coenzyme A carboxylase carboxyl transferase subunit alpha (319 aa).

A CoA carboxyltransferase C-terminal domain is found at 39–293 (RLQKKSNDLT…KAVLEKQLHE (255 aa)).

Belongs to the AccA family. In terms of assembly, acetyl-CoA carboxylase is a heterohexamer composed of biotin carboxyl carrier protein (AccB), biotin carboxylase (AccC) and two subunits each of ACCase subunit alpha (AccA) and ACCase subunit beta (AccD).

The protein localises to the cytoplasm. It carries out the reaction N(6)-carboxybiotinyl-L-lysyl-[protein] + acetyl-CoA = N(6)-biotinyl-L-lysyl-[protein] + malonyl-CoA. The protein operates within lipid metabolism; malonyl-CoA biosynthesis; malonyl-CoA from acetyl-CoA: step 1/1. In terms of biological role, component of the acetyl coenzyme A carboxylase (ACC) complex. First, biotin carboxylase catalyzes the carboxylation of biotin on its carrier protein (BCCP) and then the CO(2) group is transferred by the carboxyltransferase to acetyl-CoA to form malonyl-CoA. This Neisseria meningitidis serogroup A / serotype 4A (strain DSM 15465 / Z2491) protein is Acetyl-coenzyme A carboxylase carboxyl transferase subunit alpha.